The following is a 1121-amino-acid chain: RecBCD enzyme subunit RecC (1121 aa).

It belongs to the RecC family. As to quaternary structure, heterotrimer of RecB, RecC and RecD. All subunits contribute to DNA-binding.

Functionally, a helicase/nuclease that prepares dsDNA breaks (DSB) for recombinational DNA repair. Binds to DSBs and unwinds DNA via a highly rapid and processive ATP-dependent bidirectional helicase activity. Unwinds dsDNA until it encounters a Chi (crossover hotspot instigator) sequence from the 3' direction. Cuts ssDNA a few nucleotides 3' to the Chi site. The properties and activities of the enzyme are changed at Chi. The Chi-altered holoenzyme produces a long 3'-ssDNA overhang and facilitates RecA-binding to the ssDNA for homologous DNA recombination and repair. Holoenzyme degrades any linearized DNA that is unable to undergo homologous recombination. In the holoenzyme this subunit recognizes the wild-type Chi sequence, and when added to isolated RecB increases its ATP-dependent helicase processivity. The chain is RecBCD enzyme subunit RecC from Haemophilus influenzae (strain ATCC 51907 / DSM 11121 / KW20 / Rd).